We begin with the raw amino-acid sequence, 424 residues long: DNA primase DnaG (424 aa).

The 75-residue stretch at 171-245 (DDIIVVEGRA…DVDFVARAPP (75 aa)) folds into the Toprim domain. Positions 177, 219, and 221 each coordinate Mg(2+).

This sequence belongs to the archaeal DnaG primase family. In terms of assembly, forms a ternary complex with MCM helicase and DNA. Requires Mg(2+) as cofactor.

It carries out the reaction ssDNA + n NTP = ssDNA/pppN(pN)n-1 hybrid + (n-1) diphosphate.. Functionally, RNA polymerase that catalyzes the synthesis of short RNA molecules used as primers for DNA polymerase during DNA replication. This chain is DNA primase DnaG, found in Methanocaldococcus jannaschii (strain ATCC 43067 / DSM 2661 / JAL-1 / JCM 10045 / NBRC 100440) (Methanococcus jannaschii).